We begin with the raw amino-acid sequence, 201 residues long: NADH-quinone oxidoreductase subunit C (201 aa).

This sequence belongs to the complex I 30 kDa subunit family. NDH-1 is composed of 14 different subunits. Subunits NuoB, C, D, E, F, and G constitute the peripheral sector of the complex.

Its subcellular location is the cell inner membrane. The catalysed reaction is a quinone + NADH + 5 H(+)(in) = a quinol + NAD(+) + 4 H(+)(out). NDH-1 shuttles electrons from NADH, via FMN and iron-sulfur (Fe-S) centers, to quinones in the respiratory chain. The immediate electron acceptor for the enzyme in this species is believed to be ubiquinone. Couples the redox reaction to proton translocation (for every two electrons transferred, four hydrogen ions are translocated across the cytoplasmic membrane), and thus conserves the redox energy in a proton gradient. The chain is NADH-quinone oxidoreductase subunit C from Aromatoleum aromaticum (strain DSM 19018 / LMG 30748 / EbN1) (Azoarcus sp. (strain EbN1)).